Here is a 211-residue protein sequence, read N- to C-terminus: Protein-L-isoaspartate O-methyltransferase (211 aa).

Ser-62 is a catalytic residue.

This sequence belongs to the methyltransferase superfamily. L-isoaspartyl/D-aspartyl protein methyltransferase family.

Its subcellular location is the cytoplasm. The catalysed reaction is [protein]-L-isoaspartate + S-adenosyl-L-methionine = [protein]-L-isoaspartate alpha-methyl ester + S-adenosyl-L-homocysteine. Functionally, catalyzes the methyl esterification of L-isoaspartyl residues in peptides and proteins that result from spontaneous decomposition of normal L-aspartyl and L-asparaginyl residues. It plays a role in the repair and/or degradation of damaged proteins. The sequence is that of Protein-L-isoaspartate O-methyltransferase from Shewanella pealeana (strain ATCC 700345 / ANG-SQ1).